The following is a 297-amino-acid chain: Bifunctional protein FolD (297 aa).

Residues 168–170 (GRG), Thr195, and Val236 contribute to the NADP(+) site.

It belongs to the tetrahydrofolate dehydrogenase/cyclohydrolase family. Homodimer.

The enzyme catalyses (6R)-5,10-methylene-5,6,7,8-tetrahydrofolate + NADP(+) = (6R)-5,10-methenyltetrahydrofolate + NADPH. It catalyses the reaction (6R)-5,10-methenyltetrahydrofolate + H2O = (6R)-10-formyltetrahydrofolate + H(+). The protein operates within one-carbon metabolism; tetrahydrofolate interconversion. Catalyzes the oxidation of 5,10-methylenetetrahydrofolate to 5,10-methenyltetrahydrofolate and then the hydrolysis of 5,10-methenyltetrahydrofolate to 10-formyltetrahydrofolate. In Bifidobacterium animalis subsp. lactis (strain AD011), this protein is Bifunctional protein FolD.